Here is a 278-residue protein sequence, read N- to C-terminus: Tryptophan synthase alpha chain (278 aa).

Active-site proton acceptor residues include Glu50 and Asp61.

Belongs to the TrpA family. In terms of assembly, tetramer of two alpha and two beta chains.

It catalyses the reaction (1S,2R)-1-C-(indol-3-yl)glycerol 3-phosphate + L-serine = D-glyceraldehyde 3-phosphate + L-tryptophan + H2O. Its pathway is amino-acid biosynthesis; L-tryptophan biosynthesis; L-tryptophan from chorismate: step 5/5. The alpha subunit is responsible for the aldol cleavage of indoleglycerol phosphate to indole and glyceraldehyde 3-phosphate. The chain is Tryptophan synthase alpha chain from Rhodopseudomonas palustris (strain HaA2).